The following is a 642-amino-acid chain: Protein INCREASED PETAL GROWTH ANISOTROPY 1 (642 aa).

The disordered stretch occupies residues 1 to 60; sequence MVAGKVRVTMGFHKSPSTKKTKDMPSPLPLPPPPPPPLKPPSSGSATTKPPINPSKPGFT. Residues 26-40 are compositionally biased toward pro residues; it reads SPLPLPPPPPPPLKP. The stretch at 80-183 forms a coiled coil; that stretch reads AASHNGVVSE…EAEIVELRKL (104 aa). Residues 223 to 351 are disordered; sequence NLPEPITNQE…PPKSLSIASA (129 aa). The span at 247 to 256 shows a compositional bias: basic and acidic residues; it reads DIYRKDEIES. The span at 258 to 277 shows a compositional bias: low complexity; sequence SRSSNSEELTESSSLSTVRS. The span at 302-344 shows a compositional bias: pro residues; it reads DPPPQKSIPPPPPPPPPPLLQQPPPPPSVSKAPPPPPPPPPPK.

The protein belongs to the IPGA1 family. In terms of assembly, associates to cortical microtubules via its N-terminal region. Interacts with ANGUSTIFOLIA (AN) on microtubule upon mechanical stress to regulate microtubule organization. Binds to the microtubule-severing enzyme KATANIN (KTN1). In terms of tissue distribution, expressed ubiquitously at all development stages, with highest in developing petals. During mechanical stress, accumulates in granules on microtubules.

Its subcellular location is the cytoplasm. The protein resides in the cytoskeleton. It localises to the cytosol. It is found in the cell membrane. In terms of biological role, microtubule-associated protein involved in the regulation of anisotropic petal and cotyledons growth and shape by affecting cortical microtubule organization. Prevents cortical microtubules organization into parallel arrays oriented perpendicular to the axis of cell elongation thus limiting anisotropic cell growth in the late phases of petal development. Cooperatively with ANGUSTIFOLIA (AN), negatively regulates cortical microtubules (CMTs) organization in response to mechanical stress and modulates pavement cells morphogenesis leading to puzzle shape, probably in an AAA1/KTN1-dependent manner. The protein is Protein INCREASED PETAL GROWTH ANISOTROPY 1 of Arabidopsis thaliana (Mouse-ear cress).